Reading from the N-terminus, the 775-residue chain is Endothelin-converting enzyme-like 1 (775 aa).

At 1 to 59 the chain is on the cytoplasmic side; it reads MEPPYSLTAHYDEFQEVKYVSRCGAGGARGASLPPGFPLGAARSATGARSGLPRWNRRE. Residues 60 to 82 traverse the membrane as a helical; Signal-anchor for type II membrane protein segment; sequence VCLLSGLVFAAGLCAILAAMLAL. The Lumenal portion of the chain corresponds to 83–775; the sequence is KYLGPVAAGG…MNPAHKCSVW (693 aa). The Peptidase M13 domain occupies 98–775; sequence GCPERKAFAR…MNPAHKCSVW (678 aa). Disulfide bonds link Cys-123–Cys-760, Cys-131–Cys-720, Cys-187–Cys-441, and Cys-649–Cys-772. N-linked (GlcNAc...) asparagine glycosylation is found at Asn-255 and Asn-322. Residue His-612 coordinates Zn(2+). Residue Glu-613 is part of the active site. His-616 lines the Zn(2+) pocket. N-linked (GlcNAc...) asparagine glycosylation occurs at Asn-656. Glu-672 serves as a coordination point for Zn(2+). Residue Asp-676 is the Proton donor of the active site.

Belongs to the peptidase M13 family. Zn(2+) is required as a cofactor. Post-translationally, N-glycosylated. Highly expressed in the CNS, in particular in putamen, spinal cord, medulla and subthalamic nucleus. A strong signal was also detected in uterine subepithelial cells and around renal blood vessels. Detected at lower levels in amygdala, caudate, thalamus, pancreas and skeletal muscle. Detected at very low levels in substantia nigra, cerebellum, cortex, corpus callosum and hippocampus.

It localises to the membrane. In terms of biological role, may contribute to the degradation of peptide hormones and be involved in the inactivation of neuronal peptides. This chain is Endothelin-converting enzyme-like 1 (ECEL1), found in Homo sapiens (Human).